The chain runs to 59 residues: Cuticle protein 7 isoform a (59 aa).

Glutamine 1 is subject to Pyrrolidone carboxylic acid.

The protein is Cuticle protein 7 isoform a of Limulus polyphemus (Atlantic horseshoe crab).